Here is a 64-residue protein sequence, read N- to C-terminus: Alpha-mammal toxin Lqq5 (64 aa).

The region spanning 2–64 (KDGYIVDDKN…VSIKEKGRCN (63 aa)) is the LCN-type CS-alpha/beta domain. 4 cysteine pairs are disulfide-bonded: Cys12/Cys63, Cys16/Cys36, Cys22/Cys46, and Cys26/Cys48. Asn64 is modified (asparagine amide).

This sequence belongs to the long (4 C-C) scorpion toxin superfamily. Sodium channel inhibitor family. Alpha subfamily. In terms of tissue distribution, expressed by the venom gland.

It localises to the secreted. Its function is as follows. Alpha toxins bind voltage-independently at site-3 of sodium channels (Nav) and inhibit the inactivation of the activated channels, thereby blocking neuronal transmission. Is active on mammals and bind with high affinity to rat brain synaptosome. Does not display phospholipid-binding activity. In Leiurus quinquestriatus quinquestriatus (Egyptian scorpion), this protein is Alpha-mammal toxin Lqq5.